Here is a 218-residue protein sequence, read N- to C-terminus: UPF0319 protein PM0395 (218 aa).

The signal sequence occupies residues 1 to 21; sequence MKFRFAALASVALLTSTVSVA.

The protein belongs to the UPF0319 family.

The protein is UPF0319 protein PM0395 of Pasteurella multocida (strain Pm70).